Consider the following 830-residue polypeptide: MDATNKQYALRDRAELSAFVNQPFRNNSRIKFTCFDCSPKYFVFGANSGSLYLYDRITTSFLAIFPSQLGTIGKVSISHNEKQIAIGNQTGSIGILSTELAPSTDGEGQPIDLGGPAFVTSFCWTEDDRELYCGDSRGIVSLIQFSLFMGRNILNISLHPVLLLENRIVQIDRYKDLLLVSTLSKCVLCNTAREEFKQIGNRPRDGHATTTTTTPSPPLMIVDEEDVRIFCSRPGSRLWEADLEGNVIRTHQFKQAAAAAAAQQQLQCLQESELATAPTEAPDGTLMVVPFQVLYSIRRQLLLVHDRCQLLIIDPLHSKIVLRTDEFTDITHVAVVDEWIYLLTGENRVFQVRVEIQGDEDPFPTPGMVDEPCLESRKQKQGVYILDSMLNNNNNNNGKQMNGKESPLLLSTEATIKEALVSVVRGKYGRNIKQMFMGYEQQQQQRTPSGAPERPKTLNLTKIYEPSRSNAFANGNGHALLAEFGIEAEVEDLECDDMMEELVQTRTGQALLGTAMPNGAGTGKQQPGKKKFSTSLLDGYETSEDDATVRNLYLIFRSSIISNLNFADRYAKIFDEYDTETIVRLLRKLETLMEENEEPNARLKCMRIYFHYLKPELLWEIDADSRQFIKDGFIVCNTTDGADRARLERLAHCAACGYYLEATASCHYREIGTSLLQYYWSRKEYDECFAMVKRVPYLWRTITRYYIQDRREDKVVQCVWNLADSELLERAAGELPFELDHWRQLFELAIAYHQRHEMICLSCDKPTGGRLEDNQPESQFRQWNYLLGVALAHIRSPTELLCLVRRYADNIPRGAIAPSFYIRCLLLEAK.

3 WD repeats span residues 25–64, 67–106, and 114–153; these read RNNS…FLAI, SQLG…STDG, and GGPA…GRNI. Residues 578 to 604 adopt a coiled-coil conformation; it reads DTETIVRLLRKLETLMEENEEPNARLK.

This sequence belongs to the HPS5 family.

Its function is as follows. Has a role in the biogenesis of eye pigment granules. Eye pigment granules are specialized forms of late endosomes or lysosomes. Biogenesis of pigment granules in the eye requires molecular components required for protein delivery to lysosomes. The chain is BLOC-2 complex member HPS5 homolog from Anopheles gambiae (African malaria mosquito).